A 357-amino-acid chain; its full sequence is Protein RecA (357 aa).

67–74 (GPESSGKT) contacts ATP. The interval 335-357 (LASSASDDESTEGNIDLETGEIF) is disordered.

Belongs to the RecA family.

The protein resides in the cytoplasm. Can catalyze the hydrolysis of ATP in the presence of single-stranded DNA, the ATP-dependent uptake of single-stranded DNA by duplex DNA, and the ATP-dependent hybridization of homologous single-stranded DNAs. It interacts with LexA causing its activation and leading to its autocatalytic cleavage. In Shewanella putrefaciens (strain CN-32 / ATCC BAA-453), this protein is Protein RecA.